The following is a 249-amino-acid chain: MNVLSCSINTLIKEGLYEISGVEVGQHFYWQIGGFQVHAQVLITSWVVIAILLGSAVLAVRNPQTIPTDGQNFFEFVLEFIRDVSQTQIGEEYGPWVPFIGTLFLFIFVSNWSGALLPWKIIQLPQGELAAPTNDINTTVALALLTSAAYFYAGLSKKGLGYFSKYIQPTPILLPINILEDFTKPLSLSFRLFGNILADELVVVVLVSLVPLVVPIPVMFLGLFTSGIQALIFATLAAAYIGESMEGHH.

A run of 5 helical transmembrane segments spans residues 40–60 (QVLI…VLAV), 97–117 (VPFI…GALL), 136–156 (INTT…AGLS), 201–221 (LVVV…VMFL), and 222–242 (GLFT…AYIG).

The protein belongs to the ATPase A chain family. As to quaternary structure, F-type ATPases have 2 components, CF(1) - the catalytic core - and CF(0) - the membrane proton channel. CF(1) has five subunits: alpha(3), beta(3), gamma(1), delta(1), epsilon(1). CF(0) has four main subunits: a, b, b' and c.

The protein localises to the plastid. It is found in the chloroplast thylakoid membrane. Functionally, key component of the proton channel; it plays a direct role in the translocation of protons across the membrane. This chain is ATP synthase subunit a, chloroplastic, found in Arabis hirsuta (Hairy rock-cress).